Here is a 208-residue protein sequence, read N- to C-terminus: Protein-L-isoaspartate O-methyltransferase (208 aa).

The active site involves Ser-59.

Belongs to the methyltransferase superfamily. L-isoaspartyl/D-aspartyl protein methyltransferase family.

The protein resides in the cytoplasm. It catalyses the reaction [protein]-L-isoaspartate + S-adenosyl-L-methionine = [protein]-L-isoaspartate alpha-methyl ester + S-adenosyl-L-homocysteine. Catalyzes the methyl esterification of L-isoaspartyl residues in peptides and proteins that result from spontaneous decomposition of normal L-aspartyl and L-asparaginyl residues. It plays a role in the repair and/or degradation of damaged proteins. In Vibrio campbellii (strain ATCC BAA-1116), this protein is Protein-L-isoaspartate O-methyltransferase.